A 162-amino-acid polypeptide reads, in one-letter code: Mediator of RNA polymerase II transcription subunit 31 (162 aa).

Residues 131–162 (VQGGQNVEAGDTGHNEGDQGTQQDKENIALKT) form a disordered region. The segment covering 141 to 162 (DTGHNEGDQGTQQDKENIALKT) has biased composition (basic and acidic residues).

It belongs to the Mediator complex subunit 31 family. As to quaternary structure, component of the Mediator complex.

It localises to the nucleus. Its function is as follows. Component of the Mediator complex, a coactivator involved in the regulated transcription of nearly all RNA polymerase II-dependent genes. Mediator functions as a bridge to convey information from gene-specific regulatory proteins to the basal RNA polymerase II transcription machinery. Mediator is recruited to promoters by direct interactions with regulatory proteins and serves as a scaffold for the assembly of a functional preinitiation complex with RNA polymerase II and the general transcription factors. This Aspergillus fumigatus (strain ATCC MYA-4609 / CBS 101355 / FGSC A1100 / Af293) (Neosartorya fumigata) protein is Mediator of RNA polymerase II transcription subunit 31 (soh1).